A 234-amino-acid chain; its full sequence is 1-(5-phosphoribosyl)-5-[(5-phosphoribosylamino)methylideneamino] imidazole-4-carboxamide isomerase (234 aa).

The active-site Proton acceptor is the Asp-8. Asp-128 acts as the Proton donor in catalysis.

It belongs to the HisA/HisF family.

It is found in the cytoplasm. It carries out the reaction 1-(5-phospho-beta-D-ribosyl)-5-[(5-phospho-beta-D-ribosylamino)methylideneamino]imidazole-4-carboxamide = 5-[(5-phospho-1-deoxy-D-ribulos-1-ylimino)methylamino]-1-(5-phospho-beta-D-ribosyl)imidazole-4-carboxamide. It participates in amino-acid biosynthesis; L-histidine biosynthesis; L-histidine from 5-phospho-alpha-D-ribose 1-diphosphate: step 4/9. In Cenarchaeum symbiosum (strain A), this protein is 1-(5-phosphoribosyl)-5-[(5-phosphoribosylamino)methylideneamino] imidazole-4-carboxamide isomerase.